A 253-amino-acid polypeptide reads, in one-letter code: MSESPYTSGTTHFGFRDVAAKDKQKLVGEVFTSVARNYDLMNDLMSLGVHRAWKRYFVTTAQVKPGDRVLDLAGGTGDIAVLLKERVGNEGAVVLGDINAGMLSVGRDRLTNRGLVSGFDYVQCNAEALPFPDQSFDLVTISFGLRNVTDKDAALREMYRVLKVGGQARVLEFSEVTAEWFKPIYDFHSFKILPKLGKLFARDADSYQYLAESIRKHPPQESLKGMMGEAGFARCHFKNLTGGIVAIHSGYKI.

S-adenosyl-L-methionine is bound by residues Thr76, Asp97, 125 to 126, and Ser142; that span reads NA.

This sequence belongs to the class I-like SAM-binding methyltransferase superfamily. MenG/UbiE family.

It catalyses the reaction a 2-demethylmenaquinol + S-adenosyl-L-methionine = a menaquinol + S-adenosyl-L-homocysteine + H(+). It carries out the reaction a 2-methoxy-6-(all-trans-polyprenyl)benzene-1,4-diol + S-adenosyl-L-methionine = a 5-methoxy-2-methyl-3-(all-trans-polyprenyl)benzene-1,4-diol + S-adenosyl-L-homocysteine + H(+). The protein operates within quinol/quinone metabolism; menaquinone biosynthesis; menaquinol from 1,4-dihydroxy-2-naphthoate: step 2/2. Its pathway is cofactor biosynthesis; ubiquinone biosynthesis. Functionally, methyltransferase required for the conversion of demethylmenaquinol (DMKH2) to menaquinol (MKH2) and the conversion of 2-polyprenyl-6-methoxy-1,4-benzoquinol (DDMQH2) to 2-polyprenyl-3-methyl-6-methoxy-1,4-benzoquinol (DMQH2). In Xanthomonas oryzae pv. oryzae (strain MAFF 311018), this protein is Ubiquinone/menaquinone biosynthesis C-methyltransferase UbiE.